The following is an 86-amino-acid chain: uncharacterized protein (86 aa).

2 consecutive transmembrane segments (helical) span residues 21 to 43 (VFWVGLVVYYGFVALCWIGEATA) and 53 to 75 (FWYASFLGTFLIPLFMSIIYFYF).

It localises to the cell membrane. This is an uncharacterized protein from Archaeoglobus fulgidus (strain ATCC 49558 / DSM 4304 / JCM 9628 / NBRC 100126 / VC-16).